The sequence spans 380 residues: Cytochrome b (380 aa).

Helical transmembrane passes span F33 to M53, W77 to V98, W113 to L133, and F178 to L198. Heme-binding residues include H83 and H97. 2 residues coordinate heme: H182 and H196. H201 contributes to the a ubiquinone binding site. The next 4 membrane-spanning stretches (helical) occupy residues V226–F246, L288–H308, I320–G340, and F347–P367.

It belongs to the cytochrome b family. As to quaternary structure, the cytochrome bc1 complex contains 11 subunits: 3 respiratory subunits (MT-CYB, CYC1 and UQCRFS1), 2 core proteins (UQCRC1 and UQCRC2) and 6 low-molecular weight proteins (UQCRH/QCR6, UQCRB/QCR7, UQCRQ/QCR8, UQCR10/QCR9, UQCR11/QCR10 and a cleavage product of UQCRFS1). This cytochrome bc1 complex then forms a dimer. It depends on heme as a cofactor.

It is found in the mitochondrion inner membrane. In terms of biological role, component of the ubiquinol-cytochrome c reductase complex (complex III or cytochrome b-c1 complex) that is part of the mitochondrial respiratory chain. The b-c1 complex mediates electron transfer from ubiquinol to cytochrome c. Contributes to the generation of a proton gradient across the mitochondrial membrane that is then used for ATP synthesis. This Microtus arvalis (Common vole) protein is Cytochrome b (MT-CYB).